We begin with the raw amino-acid sequence, 344 residues long: Serine proteinase inhibitor 2 (344 aa).

It belongs to the serpin family. Poxviruses subfamily.

It localises to the host cytoplasm. In terms of biological role, viral serpin that inhibits both cysteine and serine proteinases involved in the regulation of host inflammatory and apoptosis processes. Major anti-apoptotic protein which inhibits both intrinsic and extrinsic pathways and strongly cleaves host CASP1 and CASP8 but is a rather poor inhibitor of host CASP3. Prevents the proteolytic activity of host interleukin-1-beta converting enzyme (ICE) and ICE-like enzymes. Can also block apoptosis through host tumor necrosis factor (TNF) receptor. The inhibition of host ICE is an example of a 'cross-class' interaction, in which a serpin inhibits a non-serine proteinase. Also inhibits granzyme B. In Cynomys gunnisoni (Gunnison's prairie dog), this protein is Serine proteinase inhibitor 2 (OPG199).